A 315-amino-acid polypeptide reads, in one-letter code: Histone-lysine N-methyltransferase SETMAR (315 aa).

The 64-residue stretch at 74–137 folds into the Pre-SET domain; it reads PGCACIKTPC…HCRNRVVQSG (64 aa). Zn(2+)-binding residues include Cys76, Cys78, Cys83, Cys88, Cys90, Cys119, Cys123, Cys125, and Cys129. Residues 140–264 form the SET domain; that stretch reads FLLQVFQTEK…PGEELSYDYS (125 aa). S-adenosyl-L-methionine-binding positions include 150–152, Tyr193, Arg221, and 224–225; these read KGW and NH. Zn(2+)-binding residues include Cys227, Cys288, Cys290, and Cys295. Positions 284-300 constitute a Post-SET domain; the sequence is PRKPCYCGAQSCATFLP.

Belongs to the class V-like SAM-binding methyltransferase superfamily.

Its subcellular location is the nucleus. The protein localises to the chromosome. It carries out the reaction L-lysyl(36)-[histone H3] + 2 S-adenosyl-L-methionine = N(6),N(6)-dimethyl-L-lysyl(36)-[histone H3] + 2 S-adenosyl-L-homocysteine + 2 H(+). Functionally, histone methyltransferase that methylates 'Lys-4' and 'Lys-36' of histone H3, 2 specific tags for epigenetic transcriptional activation. Specifically mediates dimethylation of H3 'Lys-36'. The sequence is that of Histone-lysine N-methyltransferase SETMAR from Rattus norvegicus (Rat).